Consider the following 533-residue polypeptide: Cytochrome P450 monooxygenase calL (533 aa).

A helical membrane pass occupies residues 8–28; the sequence is TQLALLVWGIAVCVTLAIVVP. N-linked (GlcNAc...) asparagine glycosylation is present at N33. The tract at residues 123 to 148 is disordered; that stretch reads GKFKQDQSGRSKNPVPGHDVKPGQPR. N-linked (GlcNAc...) asparagine glycosylation occurs at N388. C467 contacts heme.

This sequence belongs to the cytochrome P450 family. The cofactor is heme.

It localises to the membrane. Its pathway is secondary metabolite biosynthesis. In terms of biological role, cytochrome P450 monooxygenase; part of the gene cluster that mediates the biosynthesis of calbistrin A and related compounds. Calbistrin A is a secondary metabolite with an interesting structure that was recently found to have bioactivity against leukemia cells. It consists of two polyketides linked by an ester bond: a bicyclic decalin containing polyketide and a linear 12 carbon dioic acid structure. The polyketide synthase calA is probably responsible for forming the decalin moiety. Because calA lacks a designated enoylreductase (ER) domain, the required activity is provided by the trans-enoyl reductase calK. Following release from the PKS, calF then probably catalyzes the oxidation and the subsequent Diels Alder cycloisomerization that lead to the formation of the decalin moiety. The decalin polyketide backbone includes two C-methyl groups, at C7 and C11 in backbone, of which the C7 position is probably methylated by the methyltransferase domain of calA. A candidate for adding the methyl group at C11, if not done by CalA, is the cluster methyltransferase calH. Several additional tailoring enzymes within the cluster could be involved in the modification of the decalin polyketide product. Those include the 3 cytochrome P450 monooxygenases CalE, CalG and CalL, of which one might be responsible for the introduction of the extra hydroxyl group attached to the backbone of the decalin moiety, at position C9 in the backbone, that allows for attachment of the linear moiety. One tailoring enzyme activity that is expected to be involved in biosynthesis of calbistrin is an acyltransferase for connecting the two polyketide synthase products, and which could be performed by the cluster acyltransferase calJ. The enzyme responsible for the biosynthesis of the linear moiety, probably a second PKS, has not been identified yet. The protein is Cytochrome P450 monooxygenase calL of Penicillium decumbens.